The sequence spans 1127 residues: Zinc finger protein basonuclin-2 (1127 aa).

A disordered region spans residues 44–67 (SEEAEVDVRERDTQRDREPKRARD). Over residues 49–67 (VDVRERDTQRDREPKRARD) the composition is skewed to basic and acidic residues. Lysine 305 participates in a covalent cross-link: Glycyl lysine isopeptide (Lys-Gly) (interchain with G-Cter in SUMO2). A disordered region spans residues 386 to 450 (STQNEYNESS…DLSKTEHPKS (65 aa)). Low complexity predominate over residues 389-400 (NEYNESSESEVS). A compositionally biased stretch (polar residues) spans 403–422 (PYKSDQTPNRNALTSITNVE). Residues lysine 424, lysine 444, and lysine 449 each participate in a glycyl lysine isopeptide (Lys-Gly) (interchain with G-Cter in SUMO2) cross-link. Residues 469–492 (VFCNACGKTFYDKGTLKIHYNAVH) form a C2H2-type 1 zinc finger. Serine 589 carries the post-translational modification Phosphoserine. Residue lysine 669 forms a Glycyl lysine isopeptide (Lys-Gly) (interchain with G-Cter in SUMO2) linkage. The interval 675–772 (IDTADEFDDE…EESMEGDEHL (98 aa)) is disordered. The segment covering 676–689 (DTADEFDDEDDDPN) has biased composition (acidic residues). 2 stretches are compositionally biased toward basic and acidic residues: residues 698-708 (MSHDNHCHSQD) and 747-772 (ERDY…DEHL). The C2H2-type 2 zinc finger occupies 861–884 (KICYVCKKSFKSSYSVKLHYRNVH). Glycyl lysine isopeptide (Lys-Gly) (interchain with G-Cter in SUMO2) cross-links involve residues lysine 922 and lysine 947. Disordered regions lie at residues 955 to 976 (LGLD…HLNG) and 996 to 1041 (LQSS…TLPG). The span at 1010-1023 (AGSDEGILLDDIDG) shows a compositional bias: acidic residues. 2 C2H2-type zinc fingers span residues 1063–1086 (IMCN…KTVH) and 1091–1118 (HKCK…PNLH). Positions 1107-1127 (SRNRHSQNPNLHKNIPFTSID) are disordered.

In terms of tissue distribution, highly expressed in ovary, testis and kidney. Expressed at moderate levels in skin and small intestine, and at lower levels in lung. Trace amounts of expression detected in liver and colon. Not detected in brain, spleen or thymus.

It is found in the nucleus. Probable transcription factor specific for skin keratinocytes. May play a role in the differentiation of spermatozoa and oocytes. May also play an important role in early urinary-tract development. The polypeptide is Zinc finger protein basonuclin-2 (Mus musculus (Mouse)).